A 140-amino-acid chain; its full sequence is Lymphocyte antigen 6H (140 aa).

The signal sequence occupies residues 1–25 (MLPAAMKGLGLALLAVLLCSAPAHG). The UPAR/Ly6 domain maps to 26 to 91 (LWCQDCTLTT…RHFFSDYLMG (66 aa)). 4 disulfide bridges follow: Cys-28/Cys-52, Cys-31/Cys-40, Cys-45/Cys-73, and Cys-77/Cys-104. N-linked (GlcNAc...) asparagine glycosylation occurs at Asn-36. Gly-115 carries GPI-anchor amidated glycine lipidation. Positions 116 to 140 (AGHSPWALAGGLLLSLGPALLWAGP) are cleaved as a propeptide — removed in mature form.

In terms of assembly, interacts with CHRNA4 and CHRNA7.

The protein localises to the cell membrane. In terms of biological role, believed to act as a modulator of nicotinic acetylcholine receptors (nAChRs) activity. In vitro inhibits alpha-3:beta-4-containing nAChRs maximum response. May play a role in the intracellular trafficking of alpha-7-containing nAChRs and may inhibit their expression at the cell surface. Seems to inhibit alpha-7/CHRNA7 signaling in hippocampal neurons. This is Lymphocyte antigen 6H (LY6H) from Macaca fascicularis (Crab-eating macaque).